Consider the following 218-residue polypeptide: Small ribosomal subunit protein uS7m (218 aa).

The transit peptide at 1 to 19 (MSLLGRIAEKTSRLSCLRL) directs the protein to the mitochondrion.

Belongs to the universal ribosomal protein uS7 family. As to quaternary structure, component of the mitochondrial ribosome small subunit (28S) which comprises a 12S rRNA and about 30 distinct proteins.

The protein resides in the mitochondrion. The protein is Small ribosomal subunit protein uS7m (mRpS7) of Drosophila melanogaster (Fruit fly).